Consider the following 493-residue polypeptide: Dihydro-heme d1 dehydrogenase (493 aa).

Positions 1–18 (MRLIGLALGLLLGALAQA) are cleaved as a signal peptide. The Cytochrome c domain occupies 19-96 (GEAPGEALYR…ALVAYLYQAP (78 aa)). 5 residues coordinate heme c: Cys-31, Cys-34, His-35, Arg-68, and Met-73. Residues 114–468 (PHPLATLPSR…YDAHSLEEVK (355 aa)) are D1-heme domain. Heme d1 contacts are provided by His-165, Gly-167, Lys-169, Arg-182, Arg-207, Asn-208, His-341, Arg-390, and His-435. Arg-182 provides a ligand contact to heme c.

The protein belongs to the cytochrome c family. Monomer. Heme c serves as cofactor.

It localises to the periplasm. The enzyme catalyses dihydro-heme d1 + A = heme d1 + AH2. Its pathway is porphyrin-containing compound metabolism. Involved in heme d1 biosynthesis. Catalyzes the introduction of a double bond into the propionate side chain of pyrrole ring D of dihydro-heme d1, therefore converting dihydro-heme d1 to heme d1. This is Dihydro-heme d1 dehydrogenase from Pseudomonas aeruginosa (strain ATCC 15692 / DSM 22644 / CIP 104116 / JCM 14847 / LMG 12228 / 1C / PRS 101 / PAO1).